The following is an 896-amino-acid chain: Protein translocase subunit SecA (896 aa).

ATP contacts are provided by residues Gln-87, 105–109, and Asp-512; that span reads GEGKT. The tract at residues 858–886 is disordered; it reads RAGGEAEAAKPVVRDEKKVGRNDPCPCGS. Positions 869–878 are enriched in basic and acidic residues; that stretch reads VVRDEKKVGR. Residues Cys-882, Cys-884, Cys-893, and Cys-894 each contribute to the Zn(2+) site.

The protein belongs to the SecA family. In terms of assembly, monomer and homodimer. Part of the essential Sec protein translocation apparatus which comprises SecA, SecYEG and auxiliary proteins SecDF-YajC and YidC. The cofactor is Zn(2+).

It is found in the cell inner membrane. The protein localises to the cytoplasm. The enzyme catalyses ATP + H2O + cellular proteinSide 1 = ADP + phosphate + cellular proteinSide 2.. Functionally, part of the Sec protein translocase complex. Interacts with the SecYEG preprotein conducting channel. Has a central role in coupling the hydrolysis of ATP to the transfer of proteins into and across the cell membrane, serving as an ATP-driven molecular motor driving the stepwise translocation of polypeptide chains across the membrane. This chain is Protein translocase subunit SecA, found in Syntrophotalea carbinolica (strain DSM 2380 / NBRC 103641 / GraBd1) (Pelobacter carbinolicus).